Reading from the N-terminus, the 287-residue chain is AA14 family lytic polysaccharide monooxygenase A (287 aa).

The signal sequence occupies residues 1–18 (MLRILTLSILATSKLASA). Residues N33, N83, and N137 are each glycosylated (N-linked (GlcNAc...) asparagine). Intrachain disulfides connect C188–C193, C195–C216, and C236–C243. The N-linked (GlcNAc...) asparagine glycan is linked to N238.

The protein belongs to the polysaccharide monooxygenase AA14 family. Cu(2+) serves as cofactor.

It is found in the secreted. Its function is as follows. Lytic polysaccharide monooxygenase (LPMO) that has a broad substrate specificity with strong oxidative activity on pure amorphous cellulose and xyloglucan and plays as a bifunctional enzyme to decompose some specific network structures formed between cellulose and hemicellulose in the plant cell walls. Catalysis by LPMOs requires the reduction of the active-site copper from Cu(II) to Cu(I) by a reducing agent and H(2)O(2) or O(2) as a cosubstrate. Simultaneously oxidizes cellulose, xylan and xyloglucan in natural hemi/cellulosic substrate such as fibrillated eucalyptus pulp, and releases native and oxidized cello-oligosaccharides, xylo-oligosaccharides and xyloglucan oligosaccharides from this substrate. The cellulolytic/hemicellulolytic activity becomes weaker as the contents of xylan increase in the alkaline-extracted hemi/cellulosic substrates. The sequence is that of AA14 family lytic polysaccharide monooxygenase A from Talaromyces rugulosus (Penicillium rugulosum).